The following is a 222-amino-acid chain: Riboflavin kinase (222 aa).

The segment at 1–92 is H-T-H motif-like; the sequence is MVLAEDLECL…CRLFAHEGGH (92 aa). The interval 93-222 is riboflavin kinase; the sequence is YTLPGIVISG…DRVNVEVAYD (130 aa). 102–107 is a CDP binding site; that stretch reads GLGEGR. Mg(2+)-binding residues include Thr131 and Asn133. Ser188 and Glu196 together coordinate FMN. 201 to 204 is a CDP binding site; that stretch reads VGLR.

The protein belongs to the archaeal riboflavin kinase family. Mg(2+) is required as a cofactor.

The catalysed reaction is riboflavin + CTP = CDP + FMN + H(+). It functions in the pathway cofactor biosynthesis; FMN biosynthesis; FMN from riboflavin (CTP route): step 1/1. Catalyzes the CTP-dependent phosphorylation of riboflavin (vitamin B2) to form flavin mononucleotide (FMN). This chain is Riboflavin kinase (ribK), found in Methanoregula boonei (strain DSM 21154 / JCM 14090 / 6A8).